The chain runs to 359 residues: Beta-1,3-galactosyltransferase bre-2 (359 aa).

The Cytoplasmic portion of the chain corresponds to 1–11 (MRQSRRASSRV). Residues 12 to 29 (NRLVVIFIIVASGFLLLY) traverse the membrane as a helical; Signal-anchor for type II membrane protein segment. The Lumenal portion of the chain corresponds to 30–359 (KNTQQFTQID…NPDLEELKEK (330 aa)). Residues Asn73, Asn163, and Asn209 are each glycosylated (N-linked (GlcNAc...) asparagine).

Belongs to the glycosyltransferase 31 family.

It is found in the golgi apparatus membrane. It functions in the pathway protein modification; protein glycosylation. In terms of biological role, transfers N-acetylgalactosamine onto carbohydrate substrates. Involved in susceptibility to pore-forming crystal toxins in conjunction with bre-1, bre-3, bre-4, and bre-5. Involved in resistance to the nematotoxic C.cinerea galectin Cgl2. In Caenorhabditis elegans, this protein is Beta-1,3-galactosyltransferase bre-2.